The primary structure comprises 83 residues: MSGSTGERSFADIITSIRYWVIHSITIPSLFIAGWLFVSTGLAYDVFGSPRPNEYFTESRQGIPLITGRFDPLAQLDEFSRSF.

The helical transmembrane segment at 21–35 (VIHSITIPSLFIAGW) threads the bilayer. His-23 serves as a coordination point for heme.

The protein belongs to the PsbE/PsbF family. In terms of assembly, heterodimer of an alpha subunit and a beta subunit. PSII is composed of 1 copy each of membrane proteins PsbA, PsbB, PsbC, PsbD, PsbE, PsbF, PsbH, PsbI, PsbJ, PsbK, PsbL, PsbM, PsbT, PsbX, PsbY, PsbZ, Psb30/Ycf12, at least 3 peripheral proteins of the oxygen-evolving complex and a large number of cofactors. It forms dimeric complexes. Requires heme b as cofactor.

Its subcellular location is the plastid. The protein resides in the chloroplast thylakoid membrane. Its function is as follows. This b-type cytochrome is tightly associated with the reaction center of photosystem II (PSII). PSII is a light-driven water:plastoquinone oxidoreductase that uses light energy to abstract electrons from H(2)O, generating O(2) and a proton gradient subsequently used for ATP formation. It consists of a core antenna complex that captures photons, and an electron transfer chain that converts photonic excitation into a charge separation. This Liriodendron tulipifera (Tuliptree) protein is Cytochrome b559 subunit alpha.